The chain runs to 329 residues: 4-hydroxythreonine-4-phosphate dehydrogenase (329 aa).

H136 and T137 together coordinate substrate. The a divalent metal cation site is built by H166, H211, and H266. Substrate-binding residues include K274, N283, and R292.

The protein belongs to the PdxA family. As to quaternary structure, homodimer. Zn(2+) serves as cofactor. Mg(2+) is required as a cofactor. The cofactor is Co(2+).

The protein localises to the cytoplasm. The catalysed reaction is 4-(phosphooxy)-L-threonine + NAD(+) = 3-amino-2-oxopropyl phosphate + CO2 + NADH. It functions in the pathway cofactor biosynthesis; pyridoxine 5'-phosphate biosynthesis; pyridoxine 5'-phosphate from D-erythrose 4-phosphate: step 4/5. Catalyzes the NAD(P)-dependent oxidation of 4-(phosphooxy)-L-threonine (HTP) into 2-amino-3-oxo-4-(phosphooxy)butyric acid which spontaneously decarboxylates to form 3-amino-2-oxopropyl phosphate (AHAP). The polypeptide is 4-hydroxythreonine-4-phosphate dehydrogenase (Escherichia coli O17:K52:H18 (strain UMN026 / ExPEC)).